A 381-amino-acid chain; its full sequence is Heme A synthase (381 aa).

Helical transmembrane passes span Gly-25–Gly-45, Leu-112–Gly-132, Leu-138–Ile-158, Leu-176–Gly-196, and Val-212–Gly-232. Residue His-277 coordinates heme. The next 3 helical transmembrane spans lie at Leu-279–Ala-299, Ala-307–Leu-327, and Val-329–Thr-349. His-337 is a binding site for heme.

Belongs to the COX15/CtaA family. Type 2 subfamily. As to quaternary structure, interacts with CtaB. The cofactor is heme b.

It is found in the cell membrane. It carries out the reaction Fe(II)-heme o + 2 A + H2O = Fe(II)-heme a + 2 AH2. It functions in the pathway porphyrin-containing compound metabolism; heme A biosynthesis; heme A from heme O: step 1/1. Catalyzes the conversion of heme O to heme A by two successive hydroxylations of the methyl group at C8. The first hydroxylation forms heme I, the second hydroxylation results in an unstable dihydroxymethyl group, which spontaneously dehydrates, resulting in the formyl group of heme A. This chain is Heme A synthase, found in Methylorubrum populi (strain ATCC BAA-705 / NCIMB 13946 / BJ001) (Methylobacterium populi).